A 344-amino-acid polypeptide reads, in one-letter code: L-rhamnose-proton symporter (344 aa).

10 helical membrane-spanning segments follow: residues Ala4–Ala24, Trp38–Leu58, Phe68–Ile88, Met101–Ile121, Thr131–Val151, Leu175–Ala195, Leu214–Ile234, Ile259–Gly279, Met290–Leu310, and Val321–Gly341.

Belongs to the L-rhamnose transporter (TC 2.A.7.6) family.

It is found in the cell inner membrane. It carries out the reaction L-rhamnopyranose(in) + H(+)(in) = L-rhamnopyranose(out) + H(+)(out). Functionally, uptake of L-rhamnose across the cytoplasmic membrane with the concomitant transport of protons into the cell (symport system). In Salmonella typhi, this protein is L-rhamnose-proton symporter.